Here is a 312-residue protein sequence, read N- to C-terminus: Ribosomal RNA small subunit methyltransferase H (312 aa).

S-adenosyl-L-methionine-binding positions include 33–35 (GGH), D53, F80, D101, and Q108.

Belongs to the methyltransferase superfamily. RsmH family.

Its subcellular location is the cytoplasm. It carries out the reaction cytidine(1402) in 16S rRNA + S-adenosyl-L-methionine = N(4)-methylcytidine(1402) in 16S rRNA + S-adenosyl-L-homocysteine + H(+). In terms of biological role, specifically methylates the N4 position of cytidine in position 1402 (C1402) of 16S rRNA. The sequence is that of Ribosomal RNA small subunit methyltransferase H from Desulfosudis oleivorans (strain DSM 6200 / JCM 39069 / Hxd3) (Desulfococcus oleovorans).